The chain runs to 336 residues: Inositol 2-dehydrogenase (336 aa).

Belongs to the Gfo/Idh/MocA family. As to quaternary structure, homotetramer.

It catalyses the reaction myo-inositol + NAD(+) = scyllo-inosose + NADH + H(+). In terms of biological role, involved in the oxidation of myo-inositol (MI) to 2-keto-myo-inositol (2KMI or 2-inosose). The polypeptide is Inositol 2-dehydrogenase (Pseudomonas fluorescens (strain SBW25)).